A 309-amino-acid polypeptide reads, in one-letter code: Lipoyl synthase (309 aa).

[4Fe-4S] cluster-binding residues include C37, C42, C48, C67, C71, C74, and S281. In terms of domain architecture, Radical SAM core spans 53-270 (DGPGTATFML…RVAETEFGFL (218 aa)).

The protein belongs to the radical SAM superfamily. Lipoyl synthase family. The cofactor is [4Fe-4S] cluster.

Its subcellular location is the cytoplasm. It carries out the reaction [[Fe-S] cluster scaffold protein carrying a second [4Fe-4S](2+) cluster] + N(6)-octanoyl-L-lysyl-[protein] + 2 oxidized [2Fe-2S]-[ferredoxin] + 2 S-adenosyl-L-methionine + 4 H(+) = [[Fe-S] cluster scaffold protein] + N(6)-[(R)-dihydrolipoyl]-L-lysyl-[protein] + 4 Fe(3+) + 2 hydrogen sulfide + 2 5'-deoxyadenosine + 2 L-methionine + 2 reduced [2Fe-2S]-[ferredoxin]. It functions in the pathway protein modification; protein lipoylation via endogenous pathway; protein N(6)-(lipoyl)lysine from octanoyl-[acyl-carrier-protein]: step 2/2. Functionally, catalyzes the radical-mediated insertion of two sulfur atoms into the C-6 and C-8 positions of the octanoyl moiety bound to the lipoyl domains of lipoate-dependent enzymes, thereby converting the octanoylated domains into lipoylated derivatives. The polypeptide is Lipoyl synthase (Natronomonas pharaonis (strain ATCC 35678 / DSM 2160 / CIP 103997 / JCM 8858 / NBRC 14720 / NCIMB 2260 / Gabara) (Halobacterium pharaonis)).